The primary structure comprises 1748 residues: Non-structural replication polyprotein (1748 aa).

Residues 58–219 (SGLTSTPHPH…NQPVNALDWL (162 aa)) form the Alphavirus-like MT domain. 2 disordered regions span residues 433-507 (APLS…PPLT) and 569-633 (PASP…PAPL). Residues 458 to 475 (SASQSTSLSLSASSQLLS) are compositionally biased toward low complexity. Positions 491 to 500 (VSTSCPSASK) are enriched in polar residues. Residues 579–600 (HPLPPAQKPPRPPTTVPTPKPL) show a composition bias toward pro residues. Positions 601-616 (ASPSQTQAAQPATQSP) are enriched in low complexity. Residues 627–781 (SLLPAPLETD…PLRAGSPPSR (155 aa)) enclose the Peptidase C21 domain. Active-site for protease activity residues include Cys680 and His766. Residues 767-786 (FTAPDPLRAGSPPSRSQTNE) are disordered. The 158-residue stretch at 844–1001 (SGPSPRDRIF…RLLPFIDYYC (158 aa)) folds into the (+)RNA virus helicase ATP-binding domain. 874–881 (GFAGCGKT) contributes to the ATP binding site. A (+)RNA virus helicase C-terminal domain is found at 1002–1138 (YWSYRVPKCV…LPDFFPEIVF (137 aa)). Positions 1474–1580 (SHCTTNDYTA…SGTLSPRSNW (107 aa)) constitute a RdRp catalytic domain.

Belongs to the Tymoviridae non-structural replication polyprotein family. Specific enzymatic cleavages by the host yield mature proteins.

It catalyses the reaction RNA(n) + a ribonucleoside 5'-triphosphate = RNA(n+1) + diphosphate. Functionally, acts as a cysteine protease, methyltransferase and deubiquitinase. The cysteine protease activity cleaves the polyprotein giving rise to mature proteins. The methyltransferase domain is probably involved in viral RNA capping. In terms of biological role, RNA-directed RNA polymerase is responsible for the replication and transcription of the genome. The protein is Non-structural replication polyprotein of Erysimum latent virus (ELV).